The primary structure comprises 329 residues: DNA-directed RNA polymerase subunit alpha (329 aa).

The alpha N-terminal domain (alpha-NTD) stretch occupies residues 1 to 234; that stretch reads MQGSVTEFLK…EQLDAFVELR (234 aa). The alpha C-terminal domain (alpha-CTD) stretch occupies residues 248–329; it reads FDPILLRPVD…WPPASLADDL (82 aa).

This sequence belongs to the RNA polymerase alpha chain family. Homodimer. The RNAP catalytic core consists of 2 alpha, 1 beta, 1 beta' and 1 omega subunit. When a sigma factor is associated with the core the holoenzyme is formed, which can initiate transcription.

The catalysed reaction is RNA(n) + a ribonucleoside 5'-triphosphate = RNA(n+1) + diphosphate. In terms of biological role, DNA-dependent RNA polymerase catalyzes the transcription of DNA into RNA using the four ribonucleoside triphosphates as substrates. This chain is DNA-directed RNA polymerase subunit alpha, found in Shewanella loihica (strain ATCC BAA-1088 / PV-4).